A 557-amino-acid chain; its full sequence is T-complex protein 1 subunit theta-like 2 (557 aa).

2 disordered regions span residues 1–33 (MDSTVPSALELPQRLALNPRESPRSPEEEEPHL) and 531–557 (EIWNPDSKKTKKHPPPVETKKILGLNN).

This sequence belongs to the TCP-1 chaperonin family.

It is found in the cytoplasm. Possible molecular chaperone; assists the folding of proteins upon ATP hydrolysis. The chain is T-complex protein 1 subunit theta-like 2 (CCT8L2) from Homo sapiens (Human).